A 77-amino-acid chain; its full sequence is Acyl carrier protein (77 aa).

The Carrier domain maps to methionine 1–glutamate 76. An O-(pantetheine 4'-phosphoryl)serine modification is found at serine 36.

This sequence belongs to the acyl carrier protein (ACP) family. 4'-phosphopantetheine is transferred from CoA to a specific serine of apo-ACP by AcpS. This modification is essential for activity because fatty acids are bound in thioester linkage to the sulfhydryl of the prosthetic group.

It is found in the cytoplasm. It participates in lipid metabolism; fatty acid biosynthesis. Functionally, carrier of the growing fatty acid chain in fatty acid biosynthesis. The polypeptide is Acyl carrier protein (Staphylococcus carnosus (strain TM300)).